Reading from the N-terminus, the 242-residue chain is Alpha-aspartyl dipeptidase (242 aa).

Catalysis depends on charge relay system residues Ser125, Asp140, and His162.

Belongs to the peptidase S51 family.

It localises to the cytoplasm. The catalysed reaction is Dipeptidase E catalyzes the hydrolysis of dipeptides Asp-|-Xaa. It does not act on peptides with N-terminal Glu, Asn or Gln, nor does it cleave isoaspartyl peptides.. Hydrolyzes dipeptides containing N-terminal aspartate residues. In Xenopus laevis (African clawed frog), this protein is Alpha-aspartyl dipeptidase (aad-a).